The chain runs to 426 residues: Isovaleryl-CoA dehydrogenase, mitochondrial (426 aa).

Residues 1–32 (MATAAWLLGRRVASWRMRPPLQSLAGLITQRT) constitute a mitochondrion transit peptide. N6-acetyllysine; alternate occurs at positions 58 and 78. N6-succinyllysine; alternate occurs at positions 58 and 78. FAD contacts are provided by residues 165-174 (LAMSEPNAGS) and 198-200 (WIT). Position 174 (serine 174) interacts with substrate. A substrate-binding site is contributed by 222–223 (SR). At lysine 241 the chain carries N6-acetyllysine. Substrate-binding positions include tyrosine 277 and 284–287 (DLER). Glutamate 286 serves as the catalytic Proton acceptor. Residue arginine 312 participates in FAD binding. Lysine 318 bears the N6-succinyllysine mark. Residues glutamine 323 and 380–384 (QCLGG) contribute to the FAD site. Substrate is bound at residue 407–408 (AG). 409–411 (TSE) lines the FAD pocket.

It belongs to the acyl-CoA dehydrogenase family. As to quaternary structure, homotetramer. The cofactor is FAD.

It localises to the mitochondrion matrix. It carries out the reaction 3-methylbutanoyl-CoA + oxidized [electron-transfer flavoprotein] + H(+) = 3-methylbut-2-enoyl-CoA + reduced [electron-transfer flavoprotein]. The enzyme catalyses pentanoyl-CoA + oxidized [electron-transfer flavoprotein] + H(+) = (2E)-pentenoyl-CoA + reduced [electron-transfer flavoprotein]. The catalysed reaction is hexanoyl-CoA + oxidized [electron-transfer flavoprotein] + H(+) = (2E)-hexenoyl-CoA + reduced [electron-transfer flavoprotein]. It catalyses the reaction butanoyl-CoA + oxidized [electron-transfer flavoprotein] + H(+) = (2E)-butenoyl-CoA + reduced [electron-transfer flavoprotein]. The protein operates within amino-acid degradation; L-leucine degradation; (S)-3-hydroxy-3-methylglutaryl-CoA from 3-isovaleryl-CoA: step 1/3. Functionally, catalyzes the conversion of isovaleryl-CoA/3-methylbutanoyl-CoA to 3-methylbut-2-enoyl-CoA as an intermediate step in the leucine (Leu) catabolic pathway. To a lesser extent, is also able to catalyze the oxidation of other saturated short-chain acyl-CoA thioesters as pentanoyl-CoA, hexenoyl-CoA and butenoyl-CoA. In Bos taurus (Bovine), this protein is Isovaleryl-CoA dehydrogenase, mitochondrial (IVD).